The following is a 143-amino-acid chain: Large ribosomal subunit protein uL13 (143 aa).

It belongs to the universal ribosomal protein uL13 family. In terms of assembly, part of the 50S ribosomal subunit.

Its function is as follows. This protein is one of the early assembly proteins of the 50S ribosomal subunit, although it is not seen to bind rRNA by itself. It is important during the early stages of 50S assembly. The protein is Large ribosomal subunit protein uL13 of Dehalococcoides mccartyi (strain ATCC BAA-2100 / JCM 16839 / KCTC 5957 / BAV1).